The following is a 421-amino-acid chain: Zinc metalloproteinase-disintegrin-like lachestatin-1 (421 aa).

Residues 10 to 206 enclose the Peptidase M12B domain; it reads KYVKLVLVAD…DMPQCILEKP (197 aa). Intrachain disulfides connect C121/C201, C161/C185, and C163/C168. H146 is a Zn(2+) binding site. The active site involves E147. Zn(2+) is bound by residues H150 and H156. Residues 214–299 enclose the Disintegrin domain; sequence PPVCGNYFVE…AECTDRFQRN (86 aa). 6 residues coordinate Ca(2+): V216, N219, F221, E223, E226, and D229. Disulfide bonds link C217–C246, C228–C241, C230–C236, C240–C263, C254–C260, C259–C285, C272–C292, C279–C310, C303–C315, C322–C372, C337–C383, C350–C360, C367–C409, and C403–C414. Positions 278-280 match the D/ECD-tripeptide motif; sequence ECD. Ca(2+) contacts are provided by D280, M281, D283, D294, and R295. N-linked (GlcNAc...) asparagine glycosylation is present at N312.

This sequence belongs to the venom metalloproteinase (M12B) family. P-III subfamily. P-IIIc sub-subfamily. Homodimer; disulfide-linked. Zn(2+) is required as a cofactor. In terms of tissue distribution, expressed by the venom gland.

The protein resides in the secreted. Its function is as follows. Snake venom zinc metalloprotease that induces apoptosis in vascular endothelial cells (VEC), without degrading the extracellular matrix (it cannot cleave collagen) or inhibiting adhesion of VEC. Has also fibrinogenolytic and hemorrhagic activities. This Lachesis muta rhombeata (Bushmaster) protein is Zinc metalloproteinase-disintegrin-like lachestatin-1.